A 1192-amino-acid polypeptide reads, in one-letter code: Protein argonaute 13 (1192 aa).

The PAZ domain maps to 183-296 (TVIQFVEEFL…LPMEVCKIVE (114 aa)). In terms of domain architecture, Piwi spans 472 to 770 (LLIVILLEVS…AASHAHCCIK (299 aa)).

It belongs to the argonaute family. Ago subfamily.

Its function is as follows. Probably involved in the RNA silencing pathway. May bind to short RNAs such as microRNAs (miRNAs) or short interfering RNAs (siRNAs), and represses the translation of mRNAs which are complementary to them. In Oryza sativa subsp. japonica (Rice), this protein is Protein argonaute 13 (AGO13).